The chain runs to 1257 residues: Period circadian protein homolog 2 (1257 aa).

A disordered region spans residues 1 to 59 (MNGYVDFSPSPTSPTQEPGEPQPTQAVLQEDVDMSSGSSGNENCSTGRDSQGSDCDDSG). Over residues 8–25 (SPSPTSPTQEPGEPQPTQ) the composition is skewed to low complexity. Positions 35–53 (SSGSSGNENCSTGRDSQGS) are enriched in polar residues. Positions 109–118 (LIRTLRELKV) match the Nuclear export signal 1 motif. A PAS 1 domain is found at 179–246 (ITSEYIVKNS…FHSYTTPYKL (68 aa)). The short motif at 306-310 (LCCLL) is the LXXLL element. The region spanning 319-385 (YEAPRIPPEK…MLAIHKKILQ (67 aa)) is the PAS 2 domain. A PAC domain is found at 393–436 (YSPIRFRTRNGEYITLDTSWSSFINPWSRKISFIIGRHKVRVGP). The Nuclear export signal 2 motif lies at 460–469 (LTEQIHRLLM). The disordered stretch occupies residues 471 to 567 (PVPHSGSSGY…RDSSGASLPK (97 aa)). The tract at residues 478 to 482 (SGYGS) is important for protein stability. 2 stretches are compositionally biased toward polar residues: residues 493 to 504 (MSQTSSSDSNGQ) and 518 to 528 (SGKSQSKSHFS). The segment at 510–709 (RRSGIFKTSG…DAAGGLSQEK (200 aa)) is CSNK1E binding domain. 5 positions are modified to phosphoserine: S525, S528, S531, S538, and S544. The span at 541-555 (EMQSSPPAQVRSVTT) shows a compositional bias: polar residues. The residue at position 554 (T554) is a Phosphothreonine. A phosphoserine mark is found at S659, S693, S697, S706, S758, and S763. Disordered stretches follow at residues 678-706 (DKKPQPELETVEDVASGPESQDDAAGGLS) and 757-833 (RSRA…CPSA). A Nuclear localization signal motif is present at residues 778–794 (KKTGKNRKLKSKRVKTR). Over residues 779 to 792 (KTGKNRKLKSKRVK) the composition is skewed to basic residues. Residues 821 to 832 (SPSDTSQSSCPS) show a composition bias toward low complexity. T858 is modified (phosphothreonine). An interaction with PPARG region spans residues 882–1067 (EFAVQPLPFA…DLCSATGSAL (186 aa)). S939 bears the Phosphoserine mark. T964 is modified (phosphothreonine). Residue S971 is modified to Phosphoserine. The Nuclear export signal 3 motif lies at 983–990 (LQLNLLQL). The interval 993-1044 (APESSTGAAGTLGTTGTAASGLDCTSGASRDRQPKAPPTCSEPSDTQNSDAI) is disordered. Low complexity predominate over residues 996–1014 (SSTGAAGTLGTTGTAASGL). Polar residues predominate over residues 1033–1044 (SEPSDTQNSDAI). An LXXLL motif is present at residues 1051–1055 (LNLLL). Positions 1070 to 1089 (SGASATSDSLGSSSLGCDTS) are enriched in low complexity. The disordered stretch occupies residues 1070–1108 (SGASATSDSLGSSSLGCDTSRSGAGSSDTSHTSKYFGSI). Polar residues predominate over residues 1090–1108 (RSGAGSSDTSHTSKYFGSI). S1126 carries the post-translational modification Phosphoserine. The segment at 1157–1257 (SRDLQAVLKE…LANPRKEAQT (101 aa)) is CRY binding domain. The disordered stretch occupies residues 1226 to 1257 (EEDSPSLGLCDTSEAKEEESGQLANPRKEAQT).

In terms of assembly, homodimer. Component of the circadian core oscillator, which includes the CRY proteins, CLOCK or NPAS2, BMAL1 or BMAL2, CSNK1D and/or CSNK1E, TIMELESS, and the PER proteins. Interacts with CLOCK-BMAL1 (off DNA). Interacts directly with PER1 and PER3, and through a C-terminal domain, with CRY1 and CRY2. Interacts (via PAS 2 domain) with TIMELESS. Interacts with NFIL3. Different large complexes have been identified with different repressive functions. The core of PER complexes is composed of at least PER1, PER2, PER3, CRY1, CRY2, CSNK1D and/or CSNK1E. The large PER complex involved in the repression of transcriptional termination is composed of at least PER2, CDK9, DDX5, DHX9, NCBP1 and POLR2A (active). The large PER complex involved in the histone deacetylation is composed of at least HDAC1, PER2, SFPQ and SIN3A. The large PER complex involved in the histone methylation is composed of at least PER2, CBX3, TRIM28, SUV39H1 and/or SUV39H2; CBX3 mediates the formation of the complex. Interacts with SETX; the interaction inhibits termination of circadian target genes. Interacts with the nuclear receptors HNF4A, NR1D1, NR4A2, RORA, PPARA, PPARG and THRA; the interaction with at least PPARG is ligand dependent. Interacts with PML. Interacts (phosphorylated) with BTRC and FBXW11; the interactions trigger proteasomal degradation. Interacts with NONO and SFPQ. Interacts with CAVIN3. Interacts with MAGEL2. Interacts with MAP1LC3B. Interacts with HNF4A. Post-translationally, acetylated. Deacetylated by SIRT1, resulting in decreased protein stability. Deacetylated by SIRT6, preventing its degradation by the proteasome, resulting in increased protein stability. In terms of processing, phosphorylated by CSNK1E and CSNK1D. Phosphorylation results in PER2 protein degradation. May be dephosphorylated by PP1. Ubiquitinated, leading to its proteasomal degradation. Ubiquitination may be inhibited by CRY1. As to expression, expressed in all tissues examined including eye, brain, heart, lung, spleen, liver, pancreas and kidney. In the CNS, highly expressed in the SCN, internal granular layer of granular cells of the olfactory bulb, tuberculum olfactorium, piriform cortex, gyrus dentatus of the hippocampus, cerebellum, pars tuberalis/median eminence, and pituitary, and moderately in the tenia tecta, caudate putamen, accumbens nucleus, superior and inferior colliculus and pineal gland.

Its subcellular location is the nucleus. The protein localises to the cytoplasm. It is found in the perinuclear region. Its function is as follows. Transcriptional repressor which forms a core component of the circadian clock. The circadian clock, an internal time-keeping system, regulates various physiological processes through the generation of approximately 24 hour circadian rhythms in gene expression, which are translated into rhythms in metabolism and behavior. It is derived from the Latin roots 'circa' (about) and 'diem' (day) and acts as an important regulator of a wide array of physiological functions including metabolism, sleep, body temperature, blood pressure, endocrine, immune, cardiovascular, and renal function. Consists of two major components: the central clock, residing in the suprachiasmatic nucleus (SCN) of the brain, and the peripheral clocks that are present in nearly every tissue and organ system. Both the central and peripheral clocks can be reset by environmental cues, also known as Zeitgebers (German for 'timegivers'). The predominant Zeitgeber for the central clock is light, which is sensed by retina and signals directly to the SCN. The central clock entrains the peripheral clocks through neuronal and hormonal signals, body temperature and feeding-related cues, aligning all clocks with the external light/dark cycle. Circadian rhythms allow an organism to achieve temporal homeostasis with its environment at the molecular level by regulating gene expression to create a peak of protein expression once every 24 hours to control when a particular physiological process is most active with respect to the solar day. Transcription and translation of core clock components (CLOCK, NPAS2, BMAL1, BMAL2, PER1, PER2, PER3, CRY1 and CRY2) plays a critical role in rhythm generation, whereas delays imposed by post-translational modifications (PTMs) are important for determining the period (tau) of the rhythms (tau refers to the period of a rhythm and is the length, in time, of one complete cycle). A diurnal rhythm is synchronized with the day/night cycle, while the ultradian and infradian rhythms have a period shorter and longer than 24 hours, respectively. Disruptions in the circadian rhythms contribute to the pathology of cardiovascular diseases, cancer, metabolic syndrome and aging. A transcription/translation feedback loop (TTFL) forms the core of the molecular circadian clock mechanism. Transcription factors, CLOCK or NPAS2 and BMAL1 or BMAL2, form the positive limb of the feedback loop, act in the form of a heterodimer and activate the transcription of core clock genes and clock-controlled genes (involved in key metabolic processes), harboring E-box elements (5'-CACGTG-3') within their promoters. The core clock genes: PER1/2/3 and CRY1/2 which are transcriptional repressors form the negative limb of the feedback loop and interact with the CLOCK|NPAS2-BMAL1|BMAL2 heterodimer inhibiting its activity and thereby negatively regulating their own expression. This heterodimer also activates nuclear receptors NR1D1/2 and RORA/B/G, which form a second feedback loop and which activate and repress BMAL1 transcription, respectively. PER1 and PER2 proteins transport CRY1 and CRY2 into the nucleus with appropriate circadian timing, but also contribute directly to repression of clock-controlled target genes through interaction with several classes of RNA-binding proteins, helicases and others transcriptional repressors. PER appears to regulate circadian control of transcription by at least three different modes. First, interacts directly with the CLOCK-BMAL1 at the tail end of the nascent transcript peak to recruit complexes containing the SIN3-HDAC that remodel chromatin to repress transcription. Second, brings H3K9 methyltransferases such as SUV39H1 and SUV39H2 to the E-box elements of the circadian target genes, like PER2 itself or PER1. The recruitment of each repressive modifier to the DNA seems to be very precisely temporally orchestrated by the large PER complex, the deacetylases acting before than the methyltransferases. Additionally, large PER complexes are also recruited to the target genes 3' termination site through interactions with RNA-binding proteins and helicases that may play a role in transcription termination to regulate transcription independently of CLOCK-BMAL1 interactions. Recruitment of large PER complexes to the elongating polymerase at PER and CRY termination sites inhibited SETX action, impeding RNA polymerase II release and thereby repressing transcriptional reinitiation. May propagate clock information to metabolic pathways via the interaction with nuclear receptors. Coactivator of PPARA and corepressor of NR1D1, binds rhythmically at the promoter of nuclear receptors target genes like BMAL1 or G6PC1. Directly and specifically represses PPARG proadipogenic activity by blocking PPARG recruitment to target promoters and thereby transcriptional activation. Required for fatty acid and lipid metabolism, is involved as well in the regulation of circulating insulin levels. Plays an important role in the maintenance of cardiovascular functions through the regulation of NO and vasodilatatory prostaglandins production in aortas. Controls circadian glutamate uptake in synaptic vesicles through the regulation of VGLUT1 expression. May also be involved in the regulation of inflammatory processes. Represses the CLOCK-BMAL1 induced transcription of BHLHE40/DEC1 and ATF4. Negatively regulates the formation of the TIMELESS-CRY1 complex by competing with TIMELESS for binding to CRY1. This chain is Period circadian protein homolog 2, found in Rattus norvegicus (Rat).